The following is a 191-amino-acid chain: Large ribosomal subunit protein bL12cz (191 aa).

The N-terminal 58 residues, 1–58 (MASTTLSIATTIRSSSYPTLASINHFPSRTTTIEFPSRFGGGSSSTLTHRATHLRPIA), are a transit peptide targeting the chloroplast.

Belongs to the bacterial ribosomal protein bL12 family.

It is found in the plastid. The protein localises to the chloroplast. This chain is Large ribosomal subunit protein bL12cz (RPL12A), found in Arabidopsis thaliana (Mouse-ear cress).